Here is a 494-residue protein sequence, read N- to C-terminus: Splicing regulatory glutamine/lysine-rich protein 1 (494 aa).

Residues 69–145 enclose the RRM domain; the sequence is RTVYVGNLNS…RPLKINHSNN (77 aa). 2 positions are modified to phosphoserine: serine 174 and serine 187. The interval 176–494 is disordered; the sequence is ISAAIEPESG…ERLCSTADAV (319 aa). Over residues 183–192 the composition is skewed to basic and acidic residues; the sequence is ESGKSNERKG. 2 stretches are compositionally biased toward basic residues: residues 193–230 and 238–262; these read GRSR…RSRS and SKSP…RSRD. Residues 263–340 are compositionally biased toward basic and acidic residues; it reads KRKDTREKVK…DRSKEADEKR (78 aa). Threonine 348 is modified (phosphothreonine). A compositionally biased stretch (basic residues) spans 357-373; the sequence is RRSRSASRERRRRRSRS. Composition is skewed to basic and acidic residues over residues 404 to 453 and 463 to 474; these read REKE…KEAD and KDTARTEEESKA.

It belongs to the splicing factor SR family. As to quaternary structure, interacts with SREK1IP1. Homodimer. Binds SFRS1, SFRS2, SFRS3 and SFRS6. Interacts with the spliceosome. In terms of tissue distribution, ubiquitous. Detected in liver, brain, lung, spleen, testis and pancreas.

The protein localises to the nucleus. In terms of biological role, participates in the regulation of alternative splicing by modulating the activity of other splice facors. Inhibits the splicing activity of SFRS1, SFRS2 and SFRS6. Augments the splicing activity of SFRS3. This is Splicing regulatory glutamine/lysine-rich protein 1 (Srek1) from Rattus norvegicus (Rat).